The chain runs to 315 residues: Porphobilinogen deaminase (315 aa).

Residue C245 is modified to S-(dipyrrolylmethanemethyl)cysteine.

It belongs to the HMBS family. In terms of assembly, monomer. Requires dipyrromethane as cofactor.

It carries out the reaction 4 porphobilinogen + H2O = hydroxymethylbilane + 4 NH4(+). Its pathway is porphyrin-containing compound metabolism; protoporphyrin-IX biosynthesis; coproporphyrinogen-III from 5-aminolevulinate: step 2/4. The protein operates within porphyrin-containing compound metabolism; chlorophyll biosynthesis. In terms of biological role, tetrapolymerization of the monopyrrole PBG into the hydroxymethylbilane pre-uroporphyrinogen in several discrete steps. This Prochlorococcus marinus (strain NATL2A) protein is Porphobilinogen deaminase.